An 822-amino-acid chain; its full sequence is Putative pentatricopeptide repeat-containing protein At5g13230, mitochondrial (822 aa).

Residues 1-70 (MIVFMRIIHV…QKNDPISAKA (70 aa)) constitute a mitochondrion transit peptide. 16 PPR repeats span residues 48–82 (DSHA…GSCL), 83–117 (DLFA…NNVS), 145–179 (NPHV…GYDS), 180–210 (NAFV…ILCK), 211–245 (DIVV…GFMP), 246–280 (NNYT…CYVL), 281–311 (DPRV…MPKN), 312–346 (DVVP…FVVP), 347–381 (NEFT…GFDL), 382–416 (DIYV…NEVS), 417–447 (WNTV…QVSV), 448–482 (TEVT…NNAK), 483–513 (KVAV…METI), 514–548 (DVAS…DCKP), 549–584 (NGLT…GIEP), and 585–619 (CLEH…PSVM). Positions 620–695 (IWRAMLSASM…EPGLSWIEHQ (76 aa)) are type E motif. Residues 696–726 (GDVHYFSVGLSDHPDMKLINGMLEWLNMKAT) form a type E(+) motif region. The interval 727–822 (RAGYVPDRNA…AGVCSCGDHW (96 aa)) is type DYW motif.

The protein belongs to the PPR family. PCMP-H subfamily.

It is found in the mitochondrion. The chain is Putative pentatricopeptide repeat-containing protein At5g13230, mitochondrial (PCMP-H89) from Arabidopsis thaliana (Mouse-ear cress).